We begin with the raw amino-acid sequence, 181 residues long: NAD(P)H-quinone oxidoreductase subunit 6, chloroplastic (181 aa).

Helical transmembrane passes span 13-33 (PILY…VFFG), 35-55 (IIYS…LYLL), 64-84 (AQIL…IMLI), 98-118 (FGDI…IIMI), and 152-172 (LLPF…AITI).

Belongs to the complex I subunit 6 family. NDH is composed of at least 16 different subunits, 5 of which are encoded in the nucleus.

It localises to the plastid. The protein localises to the chloroplast thylakoid membrane. The enzyme catalyses a plastoquinone + NADH + (n+1) H(+)(in) = a plastoquinol + NAD(+) + n H(+)(out). It carries out the reaction a plastoquinone + NADPH + (n+1) H(+)(in) = a plastoquinol + NADP(+) + n H(+)(out). Its function is as follows. NDH shuttles electrons from NAD(P)H:plastoquinone, via FMN and iron-sulfur (Fe-S) centers, to quinones in the photosynthetic chain and possibly in a chloroplast respiratory chain. The immediate electron acceptor for the enzyme in this species is believed to be plastoquinone. Couples the redox reaction to proton translocation, and thus conserves the redox energy in a proton gradient. This Staurastrum punctulatum (Green alga) protein is NAD(P)H-quinone oxidoreductase subunit 6, chloroplastic (ndhG).